We begin with the raw amino-acid sequence, 122 residues long: Secreted RxLR effector protein RXLR-C251 (122 aa).

An N-terminal signal peptide occupies residues 1-24; that stretch reads MRFFYKLALMTTVASLACSDTALA. Positions 48–51 match the RxLR motif; it reads RSLR.

It belongs to the RxLR effector family.

Its subcellular location is the secreted. It localises to the host cytoplasm. The protein resides in the host nucleus. In terms of biological role, secreted effector that does not suppress pattern-triggered immunity (PTI) in plant host. The chain is Secreted RxLR effector protein RXLR-C251 from Plasmopara halstedii (Downy mildew of sunflower).